Reading from the N-terminus, the 217-residue chain is Translation initiation factor IF-3 (217 aa).

The segment at 179–217 (PRKTPLVKKEEKEAAPTKAVRTIPAPPRPTAAKVAAQQA) is disordered.

The protein belongs to the IF-3 family. In terms of assembly, monomer.

It is found in the cytoplasm. In terms of biological role, IF-3 binds to the 30S ribosomal subunit and shifts the equilibrium between 70S ribosomes and their 50S and 30S subunits in favor of the free subunits, thus enhancing the availability of 30S subunits on which protein synthesis initiation begins. The sequence is that of Translation initiation factor IF-3 from Parasynechococcus marenigrum (strain WH8102).